The chain runs to 184 residues: Putative F-box protein At4g22420 (184 aa).

An F-box domain is found at 1 to 46; that stretch reads MAECPTDLINEMFLRLRATTLKKCRVLSKPCFSLIDSPEKRVIERS. The interval 68–126 is disordered; it reads DDDEEEGNELKKSQARRNGVAKGEGNGNKVNGEAQEEVDDEEDDDDDASKGRGKHSRHV. The segment covering 85–100 has biased composition (low complexity); sequence NGVAKGEGNGNKVNGE. Residues 101 to 114 show a composition bias toward acidic residues; sequence AQEEVDDEEDDDDD.

The protein is Putative F-box protein At4g22420 of Arabidopsis thaliana (Mouse-ear cress).